Consider the following 301-residue polypeptide: Probable 5-dehydro-4-deoxyglucarate dehydratase (301 aa).

It belongs to the DapA family.

The catalysed reaction is 5-dehydro-4-deoxy-D-glucarate + H(+) = 2,5-dioxopentanoate + CO2 + H2O. It participates in carbohydrate acid metabolism; D-glucarate degradation; 2,5-dioxopentanoate from D-glucarate: step 2/2. The chain is Probable 5-dehydro-4-deoxyglucarate dehydratase from Cereibacter sphaeroides (strain ATCC 17023 / DSM 158 / JCM 6121 / CCUG 31486 / LMG 2827 / NBRC 12203 / NCIMB 8253 / ATH 2.4.1.) (Rhodobacter sphaeroides).